A 778-amino-acid polypeptide reads, in one-letter code: Phenylalanine--tRNA ligase beta subunit (778 aa).

The 112-residue stretch at 39 to 150 folds into the tRNA-binding domain; sequence YEVPQKIVFG…GKYKIGEEVS (112 aa). One can recognise a B5 domain in the interval 391 to 467; that stretch reads HEDKIISLNK…RLVGIDNIPS (77 aa). Residues aspartate 445, aspartate 451, glutamate 454, and glutamate 455 each contribute to the Mg(2+) site. An FDX-ACB domain is found at 686-778; that stretch reads SKYQASFRDL…LKNQLGVGIR (93 aa).

Belongs to the phenylalanyl-tRNA synthetase beta subunit family. Type 1 subfamily. Tetramer of two alpha and two beta subunits. Mg(2+) is required as a cofactor.

The protein resides in the cytoplasm. The enzyme catalyses tRNA(Phe) + L-phenylalanine + ATP = L-phenylalanyl-tRNA(Phe) + AMP + diphosphate + H(+). This is Phenylalanine--tRNA ligase beta subunit from Sulfurimonas denitrificans (strain ATCC 33889 / DSM 1251) (Thiomicrospira denitrificans (strain ATCC 33889 / DSM 1251)).